Here is a 477-residue protein sequence, read N- to C-terminus: Glycogen synthase (477 aa).

Lys15 is an ADP-alpha-D-glucose binding site.

This sequence belongs to the glycosyltransferase 1 family. Bacterial/plant glycogen synthase subfamily.

It catalyses the reaction [(1-&gt;4)-alpha-D-glucosyl](n) + ADP-alpha-D-glucose = [(1-&gt;4)-alpha-D-glucosyl](n+1) + ADP + H(+). It functions in the pathway glycan biosynthesis; glycogen biosynthesis. In terms of biological role, synthesizes alpha-1,4-glucan chains using ADP-glucose. In Salmonella arizonae (strain ATCC BAA-731 / CDC346-86 / RSK2980), this protein is Glycogen synthase.